Consider the following 331-residue polypeptide: HTH-type transcriptional regulator RipA (331 aa).

The HTH araC/xylS-type domain maps to 112-209; it reads RAVAQVLVSN…GATPSTFTTG (98 aa). 2 DNA-binding regions (H-T-H motif) span residues 129 to 150 and 176 to 199; these read EEFA…LKST and ISVV…RRHT.

Its function is as follows. Under iron limitation, RipA negatively controls the expression of the acn (aconitase), catA (catechol 1,2 dioxygenase), leuCD (isopropylmalate dehydratase), narKGHJI (nitrite/nitrate transporter and nitrate reductase), sdhCAB (succinate dehydrogenase), pta (phosphotransacetylase) and katA (catalase) genes. Binds to the consensus sequence in the promoter region. This chain is HTH-type transcriptional regulator RipA, found in Corynebacterium glutamicum (strain ATCC 13032 / DSM 20300 / JCM 1318 / BCRC 11384 / CCUG 27702 / LMG 3730 / NBRC 12168 / NCIMB 10025 / NRRL B-2784 / 534).